A 160-amino-acid chain; its full sequence is SsrA-binding protein (160 aa).

It belongs to the SmpB family.

Its subcellular location is the cytoplasm. Required for rescue of stalled ribosomes mediated by trans-translation. Binds to transfer-messenger RNA (tmRNA), required for stable association of tmRNA with ribosomes. tmRNA and SmpB together mimic tRNA shape, replacing the anticodon stem-loop with SmpB. tmRNA is encoded by the ssrA gene; the 2 termini fold to resemble tRNA(Ala) and it encodes a 'tag peptide', a short internal open reading frame. During trans-translation Ala-aminoacylated tmRNA acts like a tRNA, entering the A-site of stalled ribosomes, displacing the stalled mRNA. The ribosome then switches to translate the ORF on the tmRNA; the nascent peptide is terminated with the 'tag peptide' encoded by the tmRNA and targeted for degradation. The ribosome is freed to recommence translation, which seems to be the essential function of trans-translation. In Proteus mirabilis (strain HI4320), this protein is SsrA-binding protein.